The following is a 435-amino-acid chain: Probable exopolygalacturonase B (435 aa).

An N-terminal signal peptide occupies residues 1 to 15 (MKFFLATLFASAVSS). 3 N-linked (GlcNAc...) asparagine glycosylation sites follow: asparagine 59, asparagine 184, and asparagine 224. 5 PbH1 repeats span residues 208–239 (SKDVSFDDVYIHAFSTNKSALPKNSDGFDSLN), 240–261 (VDGLTVTNTRVDVGDDCFSPKP), 262–283 (NTTNIFVQNLLCNNTHGVSMGS), 294–315 (IEHAYIENVTLLNGQNGARLKA), and 326–347 (INNITYKNIRIENTDAPVVLDQ). Aspartate 254 acts as the Proton donor in catalysis. Cysteine 256 and cysteine 273 are disulfide-bonded. 2 N-linked (GlcNAc...) asparagine glycosylation sites follow: asparagine 262 and asparagine 274. The active site involves histidine 277. N-linked (GlcNAc...) asparagine glycans are attached at residues asparagine 301, asparagine 328, asparagine 365, and asparagine 373. The stretch at 366–388 (VTNILFENISGTSSGKNGKVVAD) is one PbH1 6 repeat. A disulfide bridge links cysteine 391 with cysteine 397. N-linked (GlcNAc...) asparagine glycosylation is present at asparagine 406.

This sequence belongs to the glycosyl hydrolase 28 family.

The protein localises to the secreted. It carries out the reaction [(1-&gt;4)-alpha-D-galacturonosyl](n) + H2O = alpha-D-galacturonate + [(1-&gt;4)-alpha-D-galacturonosyl](n-1). Its function is as follows. Specific in hydrolyzing the terminal glycosidic bond of polygalacturonic acid and oligogalacturonates. The protein is Probable exopolygalacturonase B (pgxB) of Aspergillus flavus (strain ATCC 200026 / FGSC A1120 / IAM 13836 / NRRL 3357 / JCM 12722 / SRRC 167).